The sequence spans 125 residues: Large ribosomal subunit protein bL12 (125 aa).

This sequence belongs to the bacterial ribosomal protein bL12 family. Homodimer. Part of the ribosomal stalk of the 50S ribosomal subunit. Forms a multimeric L10(L12)X complex, where L10 forms an elongated spine to which 2 to 4 L12 dimers bind in a sequential fashion. Binds GTP-bound translation factors.

Functionally, forms part of the ribosomal stalk which helps the ribosome interact with GTP-bound translation factors. Is thus essential for accurate translation. The chain is Large ribosomal subunit protein bL12 from Methylobacterium radiotolerans (strain ATCC 27329 / DSM 1819 / JCM 2831 / NBRC 15690 / NCIMB 10815 / 0-1).